The chain runs to 166 residues: Large ribosomal subunit protein uL10 (166 aa).

The protein belongs to the universal ribosomal protein uL10 family. Part of the ribosomal stalk of the 50S ribosomal subunit. The N-terminus interacts with L11 and the large rRNA to form the base of the stalk. The C-terminus forms an elongated spine to which L12 dimers bind in a sequential fashion forming a multimeric L10(L12)X complex.

Its function is as follows. Forms part of the ribosomal stalk, playing a central role in the interaction of the ribosome with GTP-bound translation factors. The chain is Large ribosomal subunit protein uL10 from Streptococcus agalactiae serotype III (strain NEM316).